A 143-amino-acid chain; its full sequence is Hypoxic response protein 1 (143 aa).

2 CBS domains span residues methionine 8–proline 65 and leucine 73–phenylalanine 131. The cysteines at positions 14 and 39 are disulfide-linked. 2 residues coordinate Zn(2+): histidine 97 and histidine 122.

Homodimer.

The protein resides in the secreted. Unlike some other CBS-domain containing proteins does not seem to bind AMP. The chain is Hypoxic response protein 1 (hrp1) from Mycobacterium tuberculosis (strain CDC 1551 / Oshkosh).